Here is a 155-residue protein sequence, read N- to C-terminus: SsrA-binding protein (155 aa).

It belongs to the SmpB family.

Its subcellular location is the cytoplasm. Functionally, required for rescue of stalled ribosomes mediated by trans-translation. Binds to transfer-messenger RNA (tmRNA), required for stable association of tmRNA with ribosomes. tmRNA and SmpB together mimic tRNA shape, replacing the anticodon stem-loop with SmpB. tmRNA is encoded by the ssrA gene; the 2 termini fold to resemble tRNA(Ala) and it encodes a 'tag peptide', a short internal open reading frame. During trans-translation Ala-aminoacylated tmRNA acts like a tRNA, entering the A-site of stalled ribosomes, displacing the stalled mRNA. The ribosome then switches to translate the ORF on the tmRNA; the nascent peptide is terminated with the 'tag peptide' encoded by the tmRNA and targeted for degradation. The ribosome is freed to recommence translation, which seems to be the essential function of trans-translation. The protein is SsrA-binding protein of Streptococcus uberis (strain ATCC BAA-854 / 0140J).